Here is a 447-residue protein sequence, read N- to C-terminus: uncharacterized protein (447 aa).

2 consecutive transmembrane segments (helical) span residues 380–400 (VLEIGIFGVYALEAAHILLLT) and 412–432 (ILGFPLEFWIILVVTILGVYV).

It is found in the cell membrane. This is an uncharacterized protein from Methanocaldococcus jannaschii (strain ATCC 43067 / DSM 2661 / JAL-1 / JCM 10045 / NBRC 100440) (Methanococcus jannaschii).